Consider the following 358-residue polypeptide: MFERLEAVEERYEKLNQLLMDPEVINDPKKLRDYSKEQSDLSETVQTYREYKSVRKQLDEAKAMLEEKLDPEMREMVKEEIDELEQKEEELVNKLKILLLPKDPNDEKNVIMEIRAAAGGEEAALFAGDLYRMYTRYAESQGWKTEVIEASPTGLGGYKEIIFTIIGKGAYSKLKYENGAHRVQRVPETESGGRIHTSTATVACLPEMEEIEVEINEKDIRVDTFASSGPGGQSVNTTMSAVRLTHIPTGIVVTCQDEKSQIKNKEKAMKVLRARIYDKYQQEARAEYDQTRKQAVGTGDRSERIRTYNFPQNRVTDHRIGLTIQKLDQVLDGNLDEIIEALILDDQSKKLEQANNEL.

At Q233 the chain carries N5-methylglutamine.

Belongs to the prokaryotic/mitochondrial release factor family. Methylated by PrmC. Methylation increases the termination efficiency of RF1.

It localises to the cytoplasm. Its function is as follows. Peptide chain release factor 1 directs the termination of translation in response to the peptide chain termination codons UAG and UAA. In Geobacillus sp. (strain WCH70), this protein is Peptide chain release factor 1.